Reading from the N-terminus, the 247-residue chain is 3-deoxy-manno-octulosonate cytidylyltransferase (247 aa).

It belongs to the KdsB family.

It is found in the cytoplasm. It carries out the reaction 3-deoxy-alpha-D-manno-oct-2-ulosonate + CTP = CMP-3-deoxy-beta-D-manno-octulosonate + diphosphate. It functions in the pathway nucleotide-sugar biosynthesis; CMP-3-deoxy-D-manno-octulosonate biosynthesis; CMP-3-deoxy-D-manno-octulosonate from 3-deoxy-D-manno-octulosonate and CTP: step 1/1. It participates in bacterial outer membrane biogenesis; lipopolysaccharide biosynthesis. Activates KDO (a required 8-carbon sugar) for incorporation into bacterial lipopolysaccharide in Gram-negative bacteria. This Rhodopseudomonas palustris (strain BisA53) protein is 3-deoxy-manno-octulosonate cytidylyltransferase.